Reading from the N-terminus, the 660-residue chain is MKAVVFAYHNIGCAAVRSLLEAGVEIAAVFTHVDDSNENVFFESVAKLAARNGIPVFAPEDVNHPLWVEKIRQMQPDSIFSFYYRHMLSQEILDIAPKGGFNLHGSLLPNYRGRAPINWVLVNGETETGMTLHTMTVKPDAGAIVAQEALAITDADTAATLHSRMTHLAGELLNKVIPQIVAGTHSLTEQDTTKASYFGRRTPADGEIKWANDSRTIFNLIRAVTEPFPGAFSYLGERRVTIWGATASEKTYDVTPGTIVETKPLTVACAQGSIVLHSGQAENGLYLSGDQLAAEMYLVEGMRFGPQASAVIAATRRQKVLIMGANGFIGNHLTKRLLDDGKYEIYAMDMSSSQIEQHLSHPDFHFVEGDITIHNEWIEYHIKKCDIVLPLVAIATPIEYTRNPLRVFELDFEENLKIVRACVKYDKRIIFPSTSEVYGMCTDEEFDEDTSPLITGPINRQRWIYSTSKQLLDRVIWAYGKKDNLKFTLFRPFNWMGPRLDSLNSARVGSSRAITQLILNLVEGTPIKLIDGGEQKRCFTDISEAIEALFRVIENKDGLCDGQIINIGSPDNEASIKVMAETLVEKFEEHPLRDQFPPFAGYNLVESQSFYGDGYQDVQHRRPSIKNAKKLLNWEPTIMMDQTIEDTLDFFLKTAVEETK.

The tract at residues 1-304 is formyltransferase ArnAFT; the sequence is MKAVVFAYHN…EMYLVEGMRF (304 aa). His-104 functions as the Proton donor; for formyltransferase activity in the catalytic mechanism. (6R)-10-formyltetrahydrofolate contacts are provided by residues Arg-114 and 136–140; that span reads TVKPD. The dehydrogenase ArnADH stretch occupies residues 316 to 660; it reads RRQKVLIMGA…FLKTAVEETK (345 aa). NAD(+) is bound by residues Asp-349 and 370 to 371; that span reads DI. Residues Ala-395, Tyr-400, and 434 to 435 each bind UDP-alpha-D-glucuronate; that span reads TS. The active-site Proton acceptor; for decarboxylase activity is the Glu-436. UDP-alpha-D-glucuronate contacts are provided by residues Arg-462, Asn-494, 528-537, and Tyr-615; that span reads KLIDGGEQKR. Arg-621 serves as the catalytic Proton donor; for decarboxylase activity.

In the N-terminal section; belongs to the Fmt family. UDP-L-Ara4N formyltransferase subfamily. It in the C-terminal section; belongs to the NAD(P)-dependent epimerase/dehydratase family. UDP-glucuronic acid decarboxylase subfamily. Homohexamer, formed by a dimer of trimers.

The catalysed reaction is UDP-alpha-D-glucuronate + NAD(+) = UDP-beta-L-threo-pentopyranos-4-ulose + CO2 + NADH. It carries out the reaction UDP-4-amino-4-deoxy-beta-L-arabinose + (6R)-10-formyltetrahydrofolate = UDP-4-deoxy-4-formamido-beta-L-arabinose + (6S)-5,6,7,8-tetrahydrofolate + H(+). It participates in nucleotide-sugar biosynthesis; UDP-4-deoxy-4-formamido-beta-L-arabinose biosynthesis; UDP-4-deoxy-4-formamido-beta-L-arabinose from UDP-alpha-D-glucuronate: step 1/3. Its pathway is nucleotide-sugar biosynthesis; UDP-4-deoxy-4-formamido-beta-L-arabinose biosynthesis; UDP-4-deoxy-4-formamido-beta-L-arabinose from UDP-alpha-D-glucuronate: step 3/3. It functions in the pathway bacterial outer membrane biogenesis; lipopolysaccharide biosynthesis. Its function is as follows. Bifunctional enzyme that catalyzes the oxidative decarboxylation of UDP-glucuronic acid (UDP-GlcUA) to UDP-4-keto-arabinose (UDP-Ara4O) and the addition of a formyl group to UDP-4-amino-4-deoxy-L-arabinose (UDP-L-Ara4N) to form UDP-L-4-formamido-arabinose (UDP-L-Ara4FN). The modified arabinose is attached to lipid A and is required for resistance to polymyxin and cationic antimicrobial peptides. This is Bifunctional polymyxin resistance protein ArnA from Shewanella sediminis (strain HAW-EB3).